We begin with the raw amino-acid sequence, 29 residues long: Cycloviolacin-H2 (29 aa).

Residues 1–29 constitute a cross-link (cyclopeptide (Ser-Asn)); the sequence is SAIACGESCVYIPCFIPGCSCRNRVCYLN. 3 cysteine pairs are disulfide-bonded: cysteine 5/cysteine 19, cysteine 9/cysteine 21, and cysteine 14/cysteine 26.

In terms of processing, this is a cyclic peptide.

Its function is as follows. Probably participates in a plant defense mechanism. The polypeptide is Cycloviolacin-H2 (Viola hederacea (Australian violet)).